We begin with the raw amino-acid sequence, 712 residues long: DNA ligase (712 aa).

The interval 1–22 (MVQKNEHQGGQSQHSLFAAGPT) is disordered. Residues 53–57 (DDQFD) and Asp138 contribute to the NAD(+) site. The active-site N6-AMP-lysine intermediate is Lys140. Arg161, Glu199, Lys318, and Lys342 together coordinate NAD(+). Zn(2+) contacts are provided by Cys436, Cys439, Cys454, and Cys459. The tract at residues 612-631 (RGGRSGGGSSGSTGEGGLAS) is disordered. Over residues 614-630 (GRSGGGSSGSTGEGGLA) the composition is skewed to gly residues. The BRCT domain occupies 629–712 (LASGPLAGKN…MLREAKAASE (84 aa)).

The protein belongs to the NAD-dependent DNA ligase family. LigA subfamily. Mg(2+) is required as a cofactor. It depends on Mn(2+) as a cofactor.

It catalyses the reaction NAD(+) + (deoxyribonucleotide)n-3'-hydroxyl + 5'-phospho-(deoxyribonucleotide)m = (deoxyribonucleotide)n+m + AMP + beta-nicotinamide D-nucleotide.. Its function is as follows. DNA ligase that catalyzes the formation of phosphodiester linkages between 5'-phosphoryl and 3'-hydroxyl groups in double-stranded DNA using NAD as a coenzyme and as the energy source for the reaction. It is essential for DNA replication and repair of damaged DNA. This is DNA ligase from Desulfovibrio desulfuricans (strain ATCC 27774 / DSM 6949 / MB).